The following is a 268-amino-acid chain: Glutamate 5-kinase (268 aa).

Lys-15 lines the ATP pocket. Positions 55, 142, and 158 each coordinate substrate. Residue 178–179 (SD) coordinates ATP.

The protein belongs to the glutamate 5-kinase family.

It is found in the cytoplasm. The enzyme catalyses L-glutamate + ATP = L-glutamyl 5-phosphate + ADP. It participates in amino-acid biosynthesis; L-proline biosynthesis; L-glutamate 5-semialdehyde from L-glutamate: step 1/2. Catalyzes the transfer of a phosphate group to glutamate to form L-glutamate 5-phosphate. The protein is Glutamate 5-kinase of Oenococcus oeni (strain ATCC BAA-331 / PSU-1).